The chain runs to 433 residues: Glucose-1-phosphate adenylyltransferase (433 aa).

Alpha-D-glucose 1-phosphate contacts are provided by residues Tyr117, Gly182, 197–198 (EK), and Ser215.

The protein belongs to the bacterial/plant glucose-1-phosphate adenylyltransferase family. In terms of assembly, homotetramer.

It carries out the reaction alpha-D-glucose 1-phosphate + ATP + H(+) = ADP-alpha-D-glucose + diphosphate. The protein operates within glycan biosynthesis; glycogen biosynthesis. In terms of biological role, involved in the biosynthesis of ADP-glucose, a building block required for the elongation reactions to produce glycogen. Catalyzes the reaction between ATP and alpha-D-glucose 1-phosphate (G1P) to produce pyrophosphate and ADP-Glc. This is Glucose-1-phosphate adenylyltransferase from Nitrosomonas europaea (strain ATCC 19718 / CIP 103999 / KCTC 2705 / NBRC 14298).